Consider the following 391-residue polypeptide: GTPase Obg (391 aa).

The Obg domain occupies 1-159; it reads MKFIDEALIR…RDLLLELMLL (159 aa). The OBG-type G domain occupies 160 to 333; that stretch reads ADVGMLGLPN…LTRDIMDFIE (174 aa). GTP contacts are provided by residues 166 to 173, 191 to 195, 213 to 216, 283 to 286, and 314 to 316; these read GLPNAGKS, FTTLV, DIPG, NKID, and SAA. Mg(2+)-binding residues include Ser-173 and Thr-193.

It belongs to the TRAFAC class OBG-HflX-like GTPase superfamily. OBG GTPase family. Monomer. Mg(2+) is required as a cofactor.

The protein resides in the cytoplasm. In terms of biological role, an essential GTPase which binds GTP, GDP and possibly (p)ppGpp with moderate affinity, with high nucleotide exchange rates and a fairly low GTP hydrolysis rate. Plays a role in control of the cell cycle, stress response, ribosome biogenesis and in those bacteria that undergo differentiation, in morphogenesis control. This chain is GTPase Obg, found in Actinobacillus pleuropneumoniae serotype 5b (strain L20).